We begin with the raw amino-acid sequence, 1735 residues long: MSACNTFTEHVWKPGECKNCFKPKSLHQLPPDSEKTPITHGSGKTNANHSNNHRVRSTGNFRPPVAKKPTIAVKPTMMVADGQSVCGELSIQEHCENKPVILGWNQNKTSLSQKPLNNNSEGDAEGFGSDPQQCANNDSAQKISNNNNGLTEVLKEIAGLEATPPVRGNETNARETFLGRINDCYKRSLERKIPPSCMTGSMKDSQGKHVILSGSAEVISNEGGRFCYPEFSSGEESEEDVLFSNMEEEHESWDESDEELLAMEIRMRGQPRFANFRANTLSPVRFFVSKKWNTIPLRNKSLQRICAVDYDDSYDEILNGYEENSGVSYGQGSVQSTISSDCTSPGSSFTEESRSETASSLSQKVCNGGISPGNPGNSKDIAETESNFESPPGNNEEKDESLTSKSSVKVPETHKAVLALRLQEKDGKIAVHTEKPESKASTDIAGQAVTISLVPVEEQTKPYRVVNLEQPLCKPYTVVDVSAAMASEHLGRPKIKGSSSTPNSPVTSPALTPGQINAHLKKSSAIRYQEVWTSSTSPRQKIPKIELSTGGPGPNVPPRKNCHKSAPTSPTATNISSKTIPVKSPNLSEIKFNSYNNAGMPPFPIIIHDEPSYARSSKNAIKVPIVINPNAYDNLAIYKSFLGTSGELSVKEKTTSVISHTYEEIETESKVSDSTPSKLTDCPQAKGFSNSTERKRGSVAQKVQEFNNCLNRGQSSPQRSYSSTHSSPAKIQRPTQEPAGKTEGAQGSQVPGSSSNSTREKASAVLCQIVASIQPPQTPPEAPQSSPKACSVEELYAVPPDADTTKSIPKNPPVRPKSLFTSQSSGEGEAHQTTESPTAKIQKDPSTKPVTSPPSKLVTSAQSEPPPPFPPPRSTSSPYHASNLLQRHFTNWTKPTSPTRSTEAESILHSEGSRRAADAKPKRWISFKSFFRRRKTDEEEEKEKEREKGKLVGLDGTVIHMLPPPPVQRHHWFTEAKGEASEKPAIVFMYRCDPDQGHLSVDQSKAGAEKGRAEEVLLRNSEEKKSSYLPSQIPDKACSRVTHEVAGELSPRDPRTPAGKQDGTSVTPTLPPPDLEREEEKDDTLDPTDVSPCSATYSNLGQSRAAMIPPKHPRHPKGAVDDAIAFGEKTDQEGLNASQPTPPPLPKKMIRANTEPISKDLQKAMESSLCVMANPTYDIDPNWDASSAGSSISYELKGLDVESYESLERPLHKERPVPSAANSISSLATLSVKDRFSNSMESLSSRRGLSYRQTRSIQKPQRQALYRGLDNREEVVGKLRSLHTDALKRLAVKCEDLFMAGQKDQLRFGVDSWSDFRLTSDKPCCEAGDAVYYTASYAKDPLSNYAVKICKSKAKESQQYYHSLAVRQSLPVHFNIQQDCGHFLAEVPSRLLPWEDPDAPEKAEDGTEDSEEEGKAETLGGNPEPCSETEPSQKENQRVTNRKQRSHVVVITREVPHLTVADFVRDSLAHHGNSPDLYERQVCLLLLQLCSGLEHLKPYHVTHCDLRLENLLLVQHQPGGAAQGPSPADPCPTLACPTRLIVSNFSQAKQKSHLVDPQILRDQSRLAPEIITATQYKKCDEFQTGILIYEMLHLPNPFDENPELKEKEYTRTDLPRIPLRSPYSWGLQQLASCLLNPNPSERILISDAKGILQCLLWGPREDLFQIFTTSATLAQKNALLQNWLDIKRTLLMIKFAEKSLDREGGISLEDWLCAQYLAFATTDSLSYIVKILQYR.

Disordered stretches follow at residues 26-66 (LHQL…PPVA) and 111-145 (LSQK…KISN). 2 stretches are compositionally biased toward polar residues: residues 111–121 (LSQKPLNNNSE) and 130–145 (DPQQ…KISN). S282 carries the post-translational modification Phosphoserine. Disordered stretches follow at residues 324–410 (NSGV…SVKV), 491–514 (GRPK…LTPG), and 537–580 (SPRQ…SKTI). Over residues 325–336 (SGVSYGQGSVQS) the composition is skewed to low complexity. Positions 337 to 365 (TISSDCTSPGSSFTEESRSETASSLSQKV) are enriched in polar residues. The segment covering 367-378 (NGGISPGNPGNS) has biased composition (low complexity). The span at 384–393 (TESNFESPPG) shows a compositional bias: polar residues. Low complexity predominate over residues 498–509 (SSSTPNSPVTSP). S537, S569, and S584 each carry phosphoserine. Polar residues predominate over residues 566–580 (APTSPTATNISSKTI). Phosphotyrosine is present on residues Y632 and Y638. Position 645 is a phosphoserine (S645). Y662 is subject to Phosphotyrosine. Disordered regions lie at residues 663 to 762 (EEIE…REKA), 800 to 919 (PDAD…AADA), and 1019 to 1097 (RNSE…SATY). Polar residues-rich tracts occupy residues 704-735 (QEFN…QRPT), 745-757 (AQGS…SSNS), and 819-839 (LFTS…SPTA). S824 and S825 each carry phosphoserine. The span at 847 to 863 (TKPVTSPPSKLVTSAQS) shows a compositional bias: low complexity. The segment covering 864 to 873 (EPPPPFPPPR) has biased composition (pro residues). The span at 879–901 (YHASNLLQRHFTNWTKPTSPTRS) shows a compositional bias: polar residues. A Phosphoserine modification is found at S897. Basic and acidic residues-rich tracts occupy residues 902–919 (TEAE…AADA) and 1037–1055 (ACSR…RDPR). Acidic residues predominate over residues 1076-1086 (EREEEKDDTLD). Residue T1141 is modified to Phosphothreonine. Y1177 is modified (phosphotyrosine). A required for homodimerization region spans residues 1274–1300 (EVVGKLRSLHTDALKRLAVKCEDLFMA). The 363-residue stretch at 1302-1664 (QKDQLRFGVD…LLWGPREDLF (363 aa)) folds into the Protein kinase domain. Position 1363 is a phosphoserine (S1363). The segment at 1394-1445 (WEDPDAPEKAEDGTEDSEEEGKAETLGGNPEPCSETEPSQKENQRVTNRKQR) is disordered. The tract at residues 1659–1732 (PREDLFQIFT…DSLSYIVKIL (74 aa)) is required for homodimerization.

This sequence belongs to the protein kinase superfamily. Homodimer. Interacts with BCAR1 and CRK. Interacts with PRAG1. Interacts (when phosphorylated at Tyr-1177) with SHC1 (via PID domain). Found in a complex with PPP1CA, PPP1CC and SHC1. Interacts (when phosphorylated at Tyr-632) with tensin TNS3 (when phosphorylated on the SH2 domain); TNS3 also interacts with integrins ITGB1, ITGB3 and ITGB5 and mediates their association with PEAK1. In terms of processing, phosphorylated on tyrosine in a CSK-dependent manner in response to adhesion to fibronectin and to EGF stimulation. Phosphorylation at Tyr-662 by a Src family kinase controls subcellular localization to focal adhesion and focal adhesion dynamics. Phosphorylation at Tyr-1177 is essential for binding to SHC1. Phosphorylation at Tyr-632 promotes interaction with tensin TNS3.

It localises to the cytoplasm. It is found in the cytoskeleton. The protein localises to the cell junction. The protein resides in the focal adhesion. Probable catalytically inactive kinase. Scaffolding protein that regulates the cytoskeleton to control cell spreading and migration by modulating focal adhesion dynamics. Acts as a scaffold for mediating EGFR signaling. The protein is Inactive tyrosine-protein kinase PEAK1 (Peak1) of Mus musculus (Mouse).